Here is a 136-residue protein sequence, read N- to C-terminus: Large ribosomal subunit protein uL16 (136 aa).

Belongs to the universal ribosomal protein uL16 family. In terms of assembly, part of the 50S ribosomal subunit.

Binds 23S rRNA and is also seen to make contacts with the A and possibly P site tRNAs. This Proteus mirabilis (strain HI4320) protein is Large ribosomal subunit protein uL16.